A 68-amino-acid polypeptide reads, in one-letter code: ATP synthase F(0) complex subunit 8 (68 aa).

Residues V8–T24 form a helical membrane-spanning segment. K54 bears the N6-acetyllysine; alternate mark. K54 is modified (N6-succinyllysine; alternate). K57 bears the N6-acetyllysine mark.

The protein belongs to the ATPase protein 8 family. In terms of assembly, component of the ATP synthase complex composed at least of ATP5F1A/subunit alpha, ATP5F1B/subunit beta, ATP5MC1/subunit c (homooctomer), MT-ATP6/subunit a, MT-ATP8/subunit 8, ATP5ME/subunit e, ATP5MF/subunit f, ATP5MG/subunit g, ATP5MK/subunit k, ATP5MJ/subunit j, ATP5F1C/subunit gamma, ATP5F1D/subunit delta, ATP5F1E/subunit epsilon, ATP5PF/subunit F6, ATP5PB/subunit b, ATP5PD/subunit d, ATP5PO/subunit OSCP. ATP synthase complex consists of a soluble F(1) head domain (subunits alpha(3) and beta(3)) - the catalytic core - and a membrane F(0) domain - the membrane proton channel (subunits c, a, 8, e, f, g, k and j). These two domains are linked by a central stalk (subunits gamma, delta, and epsilon) rotating inside the F1 region and a stationary peripheral stalk (subunits F6, b, d, and OSCP). Interacts with PRICKLE3.

The protein resides in the mitochondrion membrane. Subunit 8, of the mitochondrial membrane ATP synthase complex (F(1)F(0) ATP synthase or Complex V) that produces ATP from ADP in the presence of a proton gradient across the membrane which is generated by electron transport complexes of the respiratory chain. ATP synthase complex consist of a soluble F(1) head domain - the catalytic core - and a membrane F(1) domain - the membrane proton channel. These two domains are linked by a central stalk rotating inside the F(1) region and a stationary peripheral stalk. During catalysis, ATP synthesis in the catalytic domain of F(1) is coupled via a rotary mechanism of the central stalk subunits to proton translocation. In vivo, can only synthesize ATP although its ATP hydrolase activity can be activated artificially in vitro. Part of the complex F(0) domain. The protein is ATP synthase F(0) complex subunit 8 of Gorilla gorilla gorilla (Western lowland gorilla).